The primary structure comprises 639 residues: E3 ubiquitin-protein ligase HEL2 (639 aa).

Residues methionine 1–aspartate 55 are disordered. Serine 2 carries the N-acetylserine modification. Polar residues-rich tracts occupy residues glutamate 7–lysine 26 and leucine 43–alanine 54. Threonine 57 is modified (phosphothreonine). Residues cysteine 64–arginine 104 form an RING-type zinc finger. In terms of domain architecture, LIM zinc-binding spans proline 222–valine 292. Low complexity predominate over residues serine 343–serine 354. Disordered regions lie at residues serine 343–serine 367 and leucine 550–lysine 631. Residue serine 354 is modified to Phosphoserine.

Belongs to the ZNF598/HEL2 family. In terms of assembly, interacts with the E2 ubiquitin-conjugating enzyme UBC4. Interacts with histones H3 and H4.

The protein resides in the cytoplasm. It carries out the reaction S-ubiquitinyl-[E2 ubiquitin-conjugating enzyme]-L-cysteine + [acceptor protein]-L-lysine = [E2 ubiquitin-conjugating enzyme]-L-cysteine + N(6)-ubiquitinyl-[acceptor protein]-L-lysine.. The protein operates within protein modification; protein ubiquitination. Its function is as follows. E3 ubiquitin-protein ligase that plays a key role in the ribosome quality control (RQC), a pathway that takes place when a ribosome has stalled during translation, leading to degradation of nascent peptide chains. HEL2 is activated when ribosomes are stalled within an mRNA following translation of prematurely polyadenylated mRNAs. Acts as a ribosome collision sensor: specifically recognizes and binds collided ribosome and ubiquitinates the 40S ribosomal proteins RPS20/uS10 and RPS3/uS3. Catalyzes 'Lys-63'-linked polyubiquitination of RPS20/uS10, promoting recruitment of the RQT (ribosome quality control trigger) complex, which drives the disassembly of stalled ribosomes, followed by degradation of nascent peptides. HEL2 also acts as an activator of the No-Go decay (NGD) pathway by mediating polyubiquitination of monoubiquitinated RPS3/uS3 and RPS7/es7: RPS3/uS3 and RPS7/es7 are first monoubiquitinated by MAG2 and MOT2/NOT4, respectively, and HEL2 mediates formation of 'Lys-63'-linked polyubiquitin chains on monoubiquitin, leading to activation of the NGD pathway in a CUE2-mediated endonucleolytic cleavage. Polyubiquitination of RPS3/uS3 also triggers degradation of non-functional 18S rRNA. The RQC pathway and the integrated stress response (ISR) antagonize each other: HEL2 prevents the activation of GCN2, while GCN2 suppresses RQC activation. The RQC pathway functions as a preventive quality control in the secretory pathway: HEL2 binds preferentially to the pre-engaged secretory ribosome-nascent chain complexes and prevents mistargeting of secretory proteins into mitochondria. Independently of its role in RQC, also involved in the polyubiquitination and proteasomal-degradation of excess histone proteins. The chain is E3 ubiquitin-protein ligase HEL2 from Saccharomyces cerevisiae (strain ATCC 204508 / S288c) (Baker's yeast).